The primary structure comprises 315 residues: Ribose-phosphate pyrophosphokinase (315 aa).

ATP is bound by residues 40–42 (DGE) and 99–100 (RQ). The Mg(2+) site is built by His-133 and Asp-175. Residue Lys-198 is part of the active site. D-ribose 5-phosphate is bound by residues Arg-200, Asp-224, and 228-232 (DTAHS).

It belongs to the ribose-phosphate pyrophosphokinase family. Class I subfamily. As to quaternary structure, homohexamer. Mg(2+) serves as cofactor.

It is found in the cytoplasm. The catalysed reaction is D-ribose 5-phosphate + ATP = 5-phospho-alpha-D-ribose 1-diphosphate + AMP + H(+). Its pathway is metabolic intermediate biosynthesis; 5-phospho-alpha-D-ribose 1-diphosphate biosynthesis; 5-phospho-alpha-D-ribose 1-diphosphate from D-ribose 5-phosphate (route I): step 1/1. Its function is as follows. Involved in the biosynthesis of the central metabolite phospho-alpha-D-ribosyl-1-pyrophosphate (PRPP) via the transfer of pyrophosphoryl group from ATP to 1-hydroxyl of ribose-5-phosphate (Rib-5-P). This Thermotoga maritima (strain ATCC 43589 / DSM 3109 / JCM 10099 / NBRC 100826 / MSB8) protein is Ribose-phosphate pyrophosphokinase.